The following is a 191-amino-acid chain: MKLLLLLCLGLTLASSHKEAGQDVVTSNFDASKIAGEWYSILLASDAKENIEENGSMRVFVEHIRVLDNSSLAFKFQRKVNGECTDFYAVCDKVGDGVYTVAYYGENKFRLLEVNYSDYVILHLVNVNGDKTFQLMEFYGRKPDVEPKLKDKFVEICQQYGIIKENIIDLTKIDRCFQLRGSGGVQESSAE.

The N-terminal stretch at 1 to 16 (MKLLLLLCLGLTLASS) is a signal peptide. The N-linked (GlcNAc...) asparagine glycan is linked to Asn-69. The cysteines at positions 84 and 176 are disulfide-linked.

The protein belongs to the calycin superfamily. Lipocalin family. As to quaternary structure, homodimer. As to expression, in the submaxillary salivary glands of mature male pigs, but absent from that of females. Expression was much lower in submaxillary glands of castrated male pigs than in sexually mature individuals.

The protein localises to the secreted. Binds pheromones, the pheromones are released from the saliva of males and affect the sexual behavior of females. The protein is Salivary lipocalin (SAL1) of Sus scrofa (Pig).